Reading from the N-terminus, the 228-residue chain is Cytochrome c oxidase subunit 2 (228 aa).

Topologically, residues 1-26 are mitochondrial intermembrane; it reads MSTWANLGLQDSASPLMEQLIFFHDH. The chain crosses the membrane as a helical span at residues 27–48; that stretch reads ALLILVMITVLVGYLMFMLFFN. Residues 49-62 are Mitochondrial matrix-facing; it reads NYVNRFLLHGQLIE. Residues 63–82 traverse the membrane as a helical segment; that stretch reads MIWTILPAIILLFIALPSLR. Residues 83–228 lie on the Mitochondrial intermembrane side of the membrane; that stretch reads LLYLLDEINE…FIKWISSNNS (146 aa). Cu cation contacts are provided by His-161, Cys-196, Glu-198, Cys-200, His-204, and Met-207. Mg(2+) is bound at residue Glu-198.

It belongs to the cytochrome c oxidase subunit 2 family. In terms of assembly, component of the cytochrome c oxidase (complex IV, CIV), a multisubunit enzyme composed of a catalytic core of 3 subunits and several supernumerary subunits. The complex exists as a monomer or a dimer and forms supercomplexes (SCs) in the inner mitochondrial membrane with ubiquinol-cytochrome c oxidoreductase (cytochrome b-c1 complex, complex III, CIII). Cu cation serves as cofactor.

The protein localises to the mitochondrion inner membrane. It carries out the reaction 4 Fe(II)-[cytochrome c] + O2 + 8 H(+)(in) = 4 Fe(III)-[cytochrome c] + 2 H2O + 4 H(+)(out). Its function is as follows. Component of the cytochrome c oxidase, the last enzyme in the mitochondrial electron transport chain which drives oxidative phosphorylation. The respiratory chain contains 3 multisubunit complexes succinate dehydrogenase (complex II, CII), ubiquinol-cytochrome c oxidoreductase (cytochrome b-c1 complex, complex III, CIII) and cytochrome c oxidase (complex IV, CIV), that cooperate to transfer electrons derived from NADH and succinate to molecular oxygen, creating an electrochemical gradient over the inner membrane that drives transmembrane transport and the ATP synthase. Cytochrome c oxidase is the component of the respiratory chain that catalyzes the reduction of oxygen to water. Electrons originating from reduced cytochrome c in the intermembrane space (IMS) are transferred via the dinuclear copper A center (CU(A)) of subunit 2 and heme A of subunit 1 to the active site in subunit 1, a binuclear center (BNC) formed by heme A3 and copper B (CU(B)). The BNC reduces molecular oxygen to 2 water molecules using 4 electrons from cytochrome c in the IMS and 4 protons from the mitochondrial matrix. The sequence is that of Cytochrome c oxidase subunit 2 (mt:CoII) from Drosophila simulans (Fruit fly).